The primary structure comprises 60 residues: Large ribosomal subunit protein bL32 (60 aa).

Residues 1–21 (MAVPRNRHSNARKNIRRSHDA) form a disordered region.

Belongs to the bacterial ribosomal protein bL32 family.

This chain is Large ribosomal subunit protein bL32, found in Chlamydia felis (strain Fe/C-56) (Chlamydophila felis).